The following is an 86-amino-acid chain: Cell division topological specificity factor (86 aa).

Belongs to the MinE family.

Prevents the cell division inhibition by proteins MinC and MinD at internal division sites while permitting inhibition at polar sites. This ensures cell division at the proper site by restricting the formation of a division septum at the midpoint of the long axis of the cell. The polypeptide is Cell division topological specificity factor (Azoarcus sp. (strain BH72)).